A 431-amino-acid polypeptide reads, in one-letter code: Trigger factor (431 aa).

The PPIase FKBP-type domain occupies 165 to 250; the sequence is TDTAVFDFEG…LHQIKTKKIP (86 aa).

Belongs to the FKBP-type PPIase family. Tig subfamily.

Its subcellular location is the cytoplasm. It catalyses the reaction [protein]-peptidylproline (omega=180) = [protein]-peptidylproline (omega=0). Its function is as follows. Involved in protein export. Acts as a chaperone by maintaining the newly synthesized protein in an open conformation. Functions as a peptidyl-prolyl cis-trans isomerase. The sequence is that of Trigger factor from Aster yellows witches'-broom phytoplasma (strain AYWB).